We begin with the raw amino-acid sequence, 239 residues long: Ribonuclease HII (239 aa).

The 192-residue stretch at 30–221 folds into the RNase H type-2 domain; that stretch reads GPVAGVDEVG…VRRLVTAGTP (192 aa). 3 residues coordinate a divalent metal cation: D36, E37, and D130.

This sequence belongs to the RNase HII family. It depends on Mn(2+) as a cofactor. The cofactor is Mg(2+).

It localises to the cytoplasm. It catalyses the reaction Endonucleolytic cleavage to 5'-phosphomonoester.. In terms of biological role, endonuclease that specifically degrades the RNA of RNA-DNA hybrids. The chain is Ribonuclease HII from Mycobacterium sp. (strain KMS).